The chain runs to 386 residues: Large ribosomal subunit protein uL4 (386 aa).

Positions 341-357 (VEQRRLKEKQAKLDQKR) are enriched in basic and acidic residues. A disordered region spans residues 341-386 (VEQRRLKEKQAKLDQKRGIATPVEGAGKGRPRKTTAKPTKAKAGKK). Basic residues predominate over residues 369–386 (GRPRKTTAKPTKAKAGKK).

It belongs to the universal ribosomal protein uL4 family.

This Urechis caupo (Innkeeper worm) protein is Large ribosomal subunit protein uL4 (RPL4).